The primary structure comprises 307 residues: tRNA-cytidine(32) 2-sulfurtransferase (307 aa).

A PP-loop motif motif is present at residues 44–49 (SGGKDS). Residues Cys-119, Cys-122, and Cys-210 each coordinate [4Fe-4S] cluster.

Belongs to the TtcA family. Homodimer. Mg(2+) serves as cofactor. The cofactor is [4Fe-4S] cluster.

It is found in the cytoplasm. It catalyses the reaction cytidine(32) in tRNA + S-sulfanyl-L-cysteinyl-[cysteine desulfurase] + AH2 + ATP = 2-thiocytidine(32) in tRNA + L-cysteinyl-[cysteine desulfurase] + A + AMP + diphosphate + H(+). It functions in the pathway tRNA modification. Functionally, catalyzes the ATP-dependent 2-thiolation of cytidine in position 32 of tRNA, to form 2-thiocytidine (s(2)C32). The sulfur atoms are provided by the cysteine/cysteine desulfurase (IscS) system. This chain is tRNA-cytidine(32) 2-sulfurtransferase, found in Aliivibrio fischeri (strain ATCC 700601 / ES114) (Vibrio fischeri).